We begin with the raw amino-acid sequence, 49 residues long: Disintegrin echistatin-gamma (49 aa).

The Disintegrin domain occupies 1-47 (DCASGPCCRDCKFLEEGTICNMARGDDMDDYCNGKTCDCPRNPHKWP). 4 cysteine pairs are disulfide-bonded: Cys-2-Cys-11, Cys-7-Cys-32, Cys-8-Cys-37, and Cys-20-Cys-39. The Cell attachment site motif lies at 24 to 26 (RGD).

Belongs to the venom metalloproteinase (M12B) family. P-II subfamily. P-IIa sub-subfamily. In terms of assembly, monomer. Expressed by the venom gland.

The protein localises to the secreted. Has antiplatelet activities on guinea pig, followed by human, rabbit and rat platelet-rich plasma. This chain is Disintegrin echistatin-gamma, found in Echis pyramidum leakeyi (Leakey's carpet viper).